The chain runs to 402 residues: tRNA pseudouridine synthase Pus10 (402 aa).

The active-site Nucleophile is Asp-215. The segment at 370-402 is disordered; the sequence is ERGGHPGARGGTRRRPRKGPARPAGGRDRPRKT. The span at 380–389 shows a compositional bias: basic residues; the sequence is GTRRRPRKGP.

Belongs to the pseudouridine synthase Pus10 family.

The catalysed reaction is uridine(54) in tRNA = pseudouridine(54) in tRNA. It catalyses the reaction uridine(55) in tRNA = pseudouridine(55) in tRNA. Its function is as follows. Responsible for synthesis of pseudouridine from uracil-54 and uracil-55 in the psi GC loop of transfer RNAs. The protein is tRNA pseudouridine synthase Pus10 of Cenarchaeum symbiosum (strain A).